Here is a 255-residue protein sequence, read N- to C-terminus: Small ribosomal subunit protein uS2 (255 aa).

Residues 232–255 (ASGRDLGASEEVPVEPALEEASEA) form a disordered region.

It belongs to the universal ribosomal protein uS2 family.

The polypeptide is Small ribosomal subunit protein uS2 (Sinorhizobium medicae (strain WSM419) (Ensifer medicae)).